A 417-amino-acid polypeptide reads, in one-letter code: Gelsolin (417 aa).

A Gelsolin-like 4 repeat occupies 93 to 171 (KVPVLESHYG…VVQGKEPAHL (79 aa)). Residues Gly107, Asp108, Glu138, Asp150, Gly155, Pro157, Thr187, Asn227, Asp228, Glu250, Asp331, Asp332, and Glu354 each contribute to the Ca(2+) site. Gelsolin-like repeat units lie at residues 213-261 (RAVE…LKIL) and 316-392 (IEEV…PTFI).

This sequence belongs to the villin/gelsolin family.

Its subcellular location is the cytoplasm. It is found in the cytoskeleton. Functionally, calcium-regulated, actin-modulating protein that binds to the plus (or barbed) ends of actin monomers or filaments, preventing monomer exchange (end-blocking or capping). It can promote the assembly of monomers into filaments (nucleation) as well as sever filaments already formed. Plays a role in ciliogenesis. The sequence is that of Gelsolin (gsn) from Xenopus laevis (African clawed frog).